The following is a 247-amino-acid chain: Chalcone--flavanone isomerase (247 aa).

Residues Thr-56, Asn-121, and Ser-198 each contribute to the substrate site. The span at 223-235 (ENKVEEDATKTDQ) shows a compositional bias: basic and acidic residues. Positions 223-247 (ENKVEEDATKTDQEEANDLSLAKEN) are disordered.

Belongs to the chalcone isomerase family.

The enzyme catalyses a chalcone = a flavanone.. It participates in secondary metabolite biosynthesis; flavonoid biosynthesis. Its function is as follows. Catalyzes the intramolecular cyclization of bicyclic chalcones into tricyclic (S)-flavanones. Responsible for the isomerization of 4,2',4',6'-tetrahydroxychalcone (also termed chalcone) into naringenin. In Raphanus sativus (Radish), this protein is Chalcone--flavanone isomerase (CHI).